Reading from the N-terminus, the 395-residue chain is Serine/threonine-protein kinase BIK1 (395 aa).

Gly2 carries the N-myristoyl glycine lipid modification. Cys4 carries the S-palmitoyl cysteine lipid modification. Ser26 bears the Phosphoserine mark. Lys31 participates in a covalent cross-link: Glycyl lysine isopeptide (Lys-Gly) (interchain with G-Cter in ubiquitin). Residues Ser32, Ser33, and Ser34 each carry the phosphoserine modification. Thr35 is subject to Phosphothreonine. Lys41 participates in a covalent cross-link: Glycyl lysine isopeptide (Lys-Gly) (interchain with G-Cter in ubiquitin). Thr42 is subject to Phosphothreonine. The residue at position 48 (Ser48) is a Phosphoserine; by autocatalysis and BAK1. Thr50 is subject to Phosphothreonine. At Ser54 the chain carries Phosphoserine; by autocatalysis. At Thr56 the chain carries Phosphothreonine; by autocatalysis. At Thr64 the chain carries Phosphothreonine. Positions Phe67–Leu356 constitute a Protein kinase domain. Phosphoserine; by autocatalysis and BAK1 is present on Ser71. Ile73–Val81 contacts ATP. Ser89 is modified (phosphoserine; by EFR). The short motif at Ser89 to Thr90 is the Required for physical interaction with and phosphorylation of downstream signaling proteins (e.g. WRKY33, WRKY50, WRKY51 and WRKY57) to activate EFR-mediated immune signaling element. The residue at position 90 (Thr90) is a Phosphothreonine; by EFR. Residue Lys95 forms a Glycyl lysine isopeptide (Lys-Gly) (interchain with G-Cter in ubiquitin) linkage. Position 105 (Lys105) interacts with ATP. At Thr120 the chain carries Phosphothreonine; by EFR. Ser129 bears the Phosphoserine; by autocatalysis mark. Ser129 carries the post-translational modification Phosphoserine; by EFR. A Phosphotyrosine modification is found at Tyr150. Tyr168 is subject to Phosphotyrosine; by autocatalysis. Glycyl lysine isopeptide (Lys-Gly) (interchain with G-Cter in ubiquitin) cross-links involve residues Lys170 and Lys186. Ser193 carries the phosphoserine modification. Asp202 functions as the Proton acceptor in the catalytic mechanism. Ser206 carries the phosphoserine; by autocatalysis and BAK1 modification. Tyr214 is subject to Phosphotyrosine; by autocatalysis. At Ser219 the chain carries Phosphoserine. Ser233 bears the Phosphoserine; by autocatalysis mark. Ser236 bears the O-UMP-serine; by Xanthomonas campestris effector XopAC/AvrAC; alternate mark. A Phosphoserine; by autocatalysis and BAK1; alternate modification is found at Ser236. Thr237 is modified (O-UMP-threonine; by Xanthomonas campestris effector XopAC/AvrAC; alternate). Thr237 carries the phosphothreonine; by autocatalysis and BAK1; alternate modification. Thr242 bears the Phosphothreonine; by autocatalysis and BAK1 mark. Tyr243 bears the Phosphotyrosine mark. Phosphotyrosine; by autocatalysis is present on Tyr250. Phosphoserine; by autocatalysis is present on residues Ser252 and Ser253. Lys286 is covalently cross-linked (Glycyl lysine isopeptide (Lys-Gly) (interchain with G-Cter in ubiquitin)). Position 314 is a phosphothreonine; by autocatalysis (Thr314). Residue Lys337 forms a Glycyl lysine isopeptide (Lys-Gly) (interchain with G-Cter in ubiquitin) linkage. Position 341 is a phosphothreonine (Thr341). The span at Asp354–Val365 shows a compositional bias: polar residues. The segment at Asp354–Val395 is disordered. Lys358 is covalently cross-linked (Glycyl lysine isopeptide (Lys-Gly) (interchain with G-Cter in ubiquitin)). Position 360 is a phosphoserine; by autocatalysis and BAK1 (Ser360). At Thr362 the chain carries Phosphothreonine; by autocatalysis and BAK1. Residue Lys366 forms a Glycyl lysine isopeptide (Lys-Gly) (interchain with G-Cter in ubiquitin) linkage. Position 368 is a phosphothreonine; by autocatalysis and BAK1 (Thr368). Phosphothreonine occurs at positions 375 and 377.

It belongs to the protein kinase superfamily. Ser/Thr protein kinase family. In terms of assembly, interacts with FLS2. Activation of FLS2 by flagellin (flg22) induces the dissociation of the complex. Interacts with BAK1. Interacts with the Xanthomonas campestris effector XopAC/AvrAC. Interacts with CPK28. Interacts with PEPR1. Interacts with PP2C38. Interacts with BRI1. Interacts with RBOHD. Binds to EFR when not phosphorylated at Ser-89 and Thr-90, in the absence of pathogen elicitor; dissociates upon pathogen-associated molecular pattern (PAMP)-triggered activation by EFR-mediated phosphorylation. Interacts directly with and phosphorylates WRKY transcription factors in the nucleus involved in the jasmonic acid (JA) and salicylic acid (SA) regulation (e.g. WRKY33, WRKY50, WRKY51 and WRKY57) to modulate defense hormones during plant immunity. Binds to ATL44/RHA3A and ATL45/RHA3B. Binds to SIK1 to be phosphorylated and stabilized. Post-translationally, phosphorylated by SIK1 to be stabilized. Phosphorylated by FLS2 and BAK1. Autophosphorylated. Autophosphorylation is reduced in presence of the Xanthomonas campestris effector XopAC/AvrAC. Phosphorylated, especially by EFR at Ser-89 and Thr-90, in response to the microbe-associated molecular pattern (MAMP) flg22. Phosphorylation in response to flg22 is abolished in presence of the Xanthomonas campestris effector XopAC/AvrAC. Phosphorylated at Ser-233, Ser-236 and Thr-237 by PEPR1. Phosphorylated at Tyr-150, Tyr-243 and Tyr-250. Tyrosine phosphorylation is required for BIK1 function in plant innate immunity. In terms of processing, uridylylated at Ser-236 and Thr-237 by the Xanthomonas campestris effector XopAC/AvrAC. This conceals conserved phosphorylation sites in the activation loop, reducing BIK1 kinase activity and consequently inhibiting downstream signaling. Monoubiquitinated by ATL44/RHA3A and ATL45/RHA3B following phosphorylation upon the recognition of microbe-associated molecular patterns (MAMPs, e.g. flg22) by pattern recognition receptors (PRRs), then released from the FLS2/BAK1 complex and internalized dynamically into endocytic compartments followed by the activation of immune signaling.

It localises to the cell membrane. The protein resides in the endosome membrane. Its subcellular location is the nucleus. The enzyme catalyses L-seryl-[protein] + ATP = O-phospho-L-seryl-[protein] + ADP + H(+). The catalysed reaction is L-threonyl-[protein] + ATP = O-phospho-L-threonyl-[protein] + ADP + H(+). Its activity is regulated as follows. Kinase activation is repressed by the phosphatase PP2C38. Plays a central role in immune responses. Required to activate the resistance responses to necrotrophic pathogens, including the regulation of defense hormone expression (e.g. jasmonic acid (JA) and salicylic acid (SA)). Phosphorylates FLS2 and BAK1. Involved in pathogen-associated molecular pattern (PAMP)-triggered immunity (PTI) signaling, including calcium signaling, and defense responses downstream of FLS2; upon PAMP recognition, first phosphorylated by FLS2 and SIK1 prior to being monoubiquitinated by ATL44/RHA3A and ATL45/RHA3B at the plasma membrane, then internalized dynamically into endocytic compartments together with FLS2. Acts additively with PBL1 in PTI defenses. Acts as a positive regulator of the PAMP flg22-induced increase of cytosolic calcium. Upon flg22 perception, phosphorylates and activates the calcium-permeable channel OSCA1.3, promoting stomatal closure. Phosphorylates the NADPH oxidase RBOHD at specific sites in a calcium-independent manner to enhance reactive oxygen species (ROS) generation upon flg22 perception. ROS production in response to flg22 controls stomatal movement and restriction of bacterial entry into leaf tissues. Seems not required for flg22-induced MAPK activation. Required for Pep1-induced defenses. Pep1 is an endogenous elicitor that potentiates PAMP-inducible plant responses. In association with PEPR1, acts downstream of the canonical ethylene signaling cascade to regulate ethylene responses. Involved in ethylene signaling. Destabilizes EIN3, the key transcription activator in ethylene signaling, and represses EIN3-dependent transcription. Acts as a negative regulator in brassinosteroid (BR) signaling. Functions in BR signaling by direct interaction with the BR receptor BRI1 cytosolic kinase domain. Required during SCOOP small peptides (e.g. SCOOP10 and SCOOP12) perception and signaling; receptor-like cytosolic kinases (RLCK) activated by BAK1/SERK3 and SERK4 coreceptors when associated with MIK2 upon the perception of SCOOP peptides. Functionally, (Microbial infection) Xanthomonas campestris effector AvrAC/XopAC-mediated uridylylation prevents activation by phosphorylation at the same residues, thus affecting immune responses and reducing defense responses toward X.campestris, mediating avrAC/XopAC virulence functions. In Arabidopsis thaliana (Mouse-ear cress), this protein is Serine/threonine-protein kinase BIK1.